A 474-amino-acid polypeptide reads, in one-letter code: tRNA-2-methylthio-N(6)-dimethylallyladenosine synthase (474 aa).

Residues 3 to 120 (KKLHIKTWGC…LPEMINSVRG (118 aa)) form the MTTase N-terminal domain. Positions 12, 49, 83, 157, 161, and 164 each coordinate [4Fe-4S] cluster. The region spanning 143-375 (RAEGPTAFVS…QERINQQAMA (233 aa)) is the Radical SAM core domain. The TRAM domain maps to 378-441 (RRMLGTTQRI…PNSLRGKVVR (64 aa)).

It belongs to the methylthiotransferase family. MiaB subfamily. Monomer. Requires [4Fe-4S] cluster as cofactor.

Its subcellular location is the cytoplasm. It catalyses the reaction N(6)-dimethylallyladenosine(37) in tRNA + (sulfur carrier)-SH + AH2 + 2 S-adenosyl-L-methionine = 2-methylsulfanyl-N(6)-dimethylallyladenosine(37) in tRNA + (sulfur carrier)-H + 5'-deoxyadenosine + L-methionine + A + S-adenosyl-L-homocysteine + 2 H(+). In terms of biological role, catalyzes the methylthiolation of N6-(dimethylallyl)adenosine (i(6)A), leading to the formation of 2-methylthio-N6-(dimethylallyl)adenosine (ms(2)i(6)A) at position 37 in tRNAs that read codons beginning with uridine. The polypeptide is tRNA-2-methylthio-N(6)-dimethylallyladenosine synthase (Escherichia coli (strain SE11)).